Reading from the N-terminus, the 672-residue chain is Methionine--tRNA ligase (672 aa).

The 'HIGH' region signature appears at 12 to 22 (AYTNGPLHLGH). Residues Cys-144, Cys-147, Cys-156, and Cys-159 each coordinate Zn(2+). The 'KMSKS' region signature appears at 330 to 334 (KMSTS). Position 333 (Thr-333) interacts with ATP. The tRNA-binding domain maps to 573–672 (DFAKIELKVA…KDLPVGSTIC (100 aa)).

The protein belongs to the class-I aminoacyl-tRNA synthetase family. MetG type 1 subfamily. Homodimer. It depends on Zn(2+) as a cofactor.

The protein localises to the cytoplasm. The catalysed reaction is tRNA(Met) + L-methionine + ATP = L-methionyl-tRNA(Met) + AMP + diphosphate. In terms of biological role, is required not only for elongation of protein synthesis but also for the initiation of all mRNA translation through initiator tRNA(fMet) aminoacylation. The sequence is that of Methionine--tRNA ligase from Methanococcus aeolicus (strain ATCC BAA-1280 / DSM 17508 / OCM 812 / Nankai-3).